Consider the following 498-residue polypeptide: ATP synthase subunit beta, chloroplastic (498 aa).

172 to 179 (GGAGVGKT) contacts ATP.

The protein belongs to the ATPase alpha/beta chains family. In terms of assembly, F-type ATPases have 2 components, CF(1) - the catalytic core - and CF(0) - the membrane proton channel. CF(1) has five subunits: alpha(3), beta(3), gamma(1), delta(1), epsilon(1). CF(0) has four main subunits: a(1), b(1), b'(1) and c(9-12).

The protein localises to the plastid. The protein resides in the chloroplast thylakoid membrane. The enzyme catalyses ATP + H2O + 4 H(+)(in) = ADP + phosphate + 5 H(+)(out). Its function is as follows. Produces ATP from ADP in the presence of a proton gradient across the membrane. The catalytic sites are hosted primarily by the beta subunits. The sequence is that of ATP synthase subunit beta, chloroplastic from Nandina domestica (Heavenly bamboo).